Reading from the N-terminus, the 157-residue chain is SsrA-binding protein (157 aa).

Belongs to the SmpB family.

Its subcellular location is the cytoplasm. Its function is as follows. Required for rescue of stalled ribosomes mediated by trans-translation. Binds to transfer-messenger RNA (tmRNA), required for stable association of tmRNA with ribosomes. tmRNA and SmpB together mimic tRNA shape, replacing the anticodon stem-loop with SmpB. tmRNA is encoded by the ssrA gene; the 2 termini fold to resemble tRNA(Ala) and it encodes a 'tag peptide', a short internal open reading frame. During trans-translation Ala-aminoacylated tmRNA acts like a tRNA, entering the A-site of stalled ribosomes, displacing the stalled mRNA. The ribosome then switches to translate the ORF on the tmRNA; the nascent peptide is terminated with the 'tag peptide' encoded by the tmRNA and targeted for degradation. The ribosome is freed to recommence translation, which seems to be the essential function of trans-translation. In Rhodococcus jostii (strain RHA1), this protein is SsrA-binding protein.